We begin with the raw amino-acid sequence, 124 residues long: Large ribosomal subunit protein bL12 (124 aa).

Belongs to the bacterial ribosomal protein bL12 family. As to quaternary structure, homodimer. Part of the ribosomal stalk of the 50S ribosomal subunit. Forms a multimeric L10(L12)X complex, where L10 forms an elongated spine to which 2 to 4 L12 dimers bind in a sequential fashion. Binds GTP-bound translation factors.

Functionally, forms part of the ribosomal stalk which helps the ribosome interact with GTP-bound translation factors. Is thus essential for accurate translation. The sequence is that of Large ribosomal subunit protein bL12 from Cupriavidus taiwanensis (strain DSM 17343 / BCRC 17206 / CCUG 44338 / CIP 107171 / LMG 19424 / R1) (Ralstonia taiwanensis (strain LMG 19424)).